The primary structure comprises 397 residues: Keratinocyte differentiation factor 1 (397 aa).

The span at 1 to 16 (MPRPGQPRPSSGPPRL) shows a compositional bias: pro residues. Disordered stretches follow at residues 1 to 67 (MPRP…SAEP), 130 to 158 (EHNG…MGSS), and 192 to 214 (LAEP…RGSE). Over residues 44 to 55 (RPDPKDPGHHGP) the composition is skewed to basic and acidic residues. Residues 201-211 (SLPSTFTNSPR) show a composition bias toward polar residues. Ser218 is subject to Phosphoserine. 2 disordered regions span residues 304-339 (ISTR…TMLG) and 361-392 (ARKL…GAPL). Residues 321 to 330 (ARSTAPAAAP) show a composition bias toward low complexity. Polar residues predominate over residues 375–388 (SQDSSFQGTDTDSS).

The protein localises to the cytoplasm. The protein resides in the cell junction. Functionally, plays a role in the regulation of the epidermis formation during early development. Required both as an inhibitor of basal cell proliferation and a promoter of differentiation of basal progenitor cell progeny. This chain is Keratinocyte differentiation factor 1 (Kdf1), found in Mus musculus (Mouse).